A 256-amino-acid polypeptide reads, in one-letter code: Low molecular mass lipoprotein PBMHP-6 (256 aa).

A signal peptide spans 1–19 (MRLTLFAFVLAVCALASNA).

This sequence belongs to the 30 kDa lipoprotein family.

It is found in the secreted. The chain is Low molecular mass lipoprotein PBMHP-6 from Bombyx mori (Silk moth).